The chain runs to 346 residues: tRNA N6-adenosine threonylcarbamoyltransferase (346 aa).

Residues histidine 117, histidine 121, and tyrosine 138 each contribute to the a divalent metal cation site. Substrate-binding positions include 138-142, aspartate 170, glycine 185, and asparagine 277; that span reads YVSGG. Aspartate 305 contributes to the a divalent metal cation binding site.

This sequence belongs to the KAE1 / TsaD family. As to quaternary structure, component of the EKC/KEOPS complex composed of at least SPAP27G11.07c/BUD32, cgi121, gon7, pgp2 and SPAC4H3.13/PCC1; the whole complex dimerizes. It depends on a divalent metal cation as a cofactor.

The protein localises to the cytoplasm. The protein resides in the nucleus. The catalysed reaction is L-threonylcarbamoyladenylate + adenosine(37) in tRNA = N(6)-L-threonylcarbamoyladenosine(37) in tRNA + AMP + H(+). In terms of biological role, component of the EKC/KEOPS complex that is required for the formation of a threonylcarbamoyl group on adenosine at position 37 (t(6)A37) in tRNAs that read codons beginning with adenine. The complex is probably involved in the transfer of the threonylcarbamoyl moiety of threonylcarbamoyl-AMP (TC-AMP) to the N6 group of A37. Pgp2 likely plays a direct catalytic role in this reaction, but requires other protein(s) of the complex to fulfill this activity. The EKC/KEOPS complex also promotes both telomere uncapping and telomere elongation. The complex is required for efficient recruitment of transcriptional coactivators. The sequence is that of tRNA N6-adenosine threonylcarbamoyltransferase (pgp2) from Schizosaccharomyces pombe (strain 972 / ATCC 24843) (Fission yeast).